The chain runs to 199 residues: Urease accessory protein UreG (199 aa).

Residue 8 to 15 (GPVGSGKT) coordinates GTP.

It belongs to the SIMIBI class G3E GTPase family. UreG subfamily. Homodimer. UreH, UreF and UreG form a complex that acts as a GTP-hydrolysis-dependent molecular chaperone, activating the urease apoprotein by helping to assemble the nickel containing metallocenter of UreC. The UreE protein probably delivers the nickel.

It is found in the cytoplasm. Facilitates the functional incorporation of the urease nickel metallocenter. This process requires GTP hydrolysis, probably effectuated by UreG. This is Urease accessory protein UreG from Helicobacter pylori (strain P12).